Here is a 280-residue protein sequence, read N- to C-terminus: Hydroxyethylthiazole kinase (280 aa).

Residue M58 coordinates substrate. R129 lines the ATP pocket. A206 provides a ligand contact to substrate.

Belongs to the Thz kinase family. It depends on Mg(2+) as a cofactor.

It catalyses the reaction 5-(2-hydroxyethyl)-4-methylthiazole + ATP = 4-methyl-5-(2-phosphooxyethyl)-thiazole + ADP + H(+). Its pathway is cofactor biosynthesis; thiamine diphosphate biosynthesis; 4-methyl-5-(2-phosphoethyl)-thiazole from 5-(2-hydroxyethyl)-4-methylthiazole: step 1/1. Its function is as follows. Thiazole kinase involved in thiamine salvage pathway. This Zea mays (Maize) protein is Hydroxyethylthiazole kinase (THIM).